The sequence spans 560 residues: Vanillyl-alcohol oxidase (560 aa).

An FAD-binding PCMH-type domain is found at D67–N272. Y108 is an active-site residue. H422 is modified (tele-8alpha-FAD histidine). Catalysis depends on residues Y503 and R504.

The protein to bacterial flavocytochrome p-cresol methyl hydroxylase. As to quaternary structure, homooctamer (tetramer of tightly interacting dimers). It depends on FAD as a cofactor.

It is found in the peroxisome. Its subcellular location is the cytoplasm. It catalyses the reaction 4-hydroxy-3-methoxy-benzenemethanol + O2 = vanillin + H2O2. With respect to regulation, competitively inhibited by cinnamyl and coniferyl alcohols and by isoeugenol. Catalyzes the conversion of vanillin alcohol to vanillin, and also the conversion of a wide range of phenolic compounds bearing side chains of variable size at the para position of the aromatic ring. Crucial for the degradation of the secondary metabolites derived from the degradation of the lignin. Catalyzes besides the oxidation of 4-hydroxybenzyl alcohols, the oxidative deamination of 4-hydroxybenzylamines, the oxidative demethylation of 4-(methoxy-methyl)phenols and the oxidative hydration of 4-allylphenols. Most active with 4-allylphenols. This chain is Vanillyl-alcohol oxidase (VAOA), found in Penicillium simplicissimum.